The primary structure comprises 31 residues: Cuticle protein 54 (31 aa).

2 consecutive repeat copies span residues 7 to 10 (AAPA) and 13 to 17 (AAPAI).

Its function is as follows. Component of the cuticle of migratory locust which contains more than 100 different structural proteins. This Locusta migratoria (Migratory locust) protein is Cuticle protein 54.